Reading from the N-terminus, the 258-residue chain is GCN5-related N-acetyltransferase 2, chloroplastic (258 aa).

The transit peptide at 1–58 (MLLIPISSSSSSSISPPPNSYPSNHHSLFFSNLTFPIQHGSRKLKTLRLRANFWESIR) directs the protein to the chloroplast. Residues 107 to 194 (IIFSSGGEID…DHAFNATIWD (88 aa)) are interaction with begomoviruses NSP protein. Positions 107-258 (IIFSSGGEID…GIKGMFWYPK (152 aa)) constitute an N-acetyltransferase domain. Acetyl-CoA-binding positions include 195–197 (VLV), 203–208 (GQGLGK), 231–233 (DSQ), and Tyr238. Catalysis depends on Tyr238, which acts as the Proton donor.

Belongs to the acetyltransferase family. GNAT subfamily. In terms of assembly, oligomer. Interacts with begomoviruses NSP but not with CP. This interaction may allow NSP to recruit NSI monomers to acetylate viral genome-bound CP and thus regulate nuclear export of viral genome by NSP. In terms of processing, S-sulfhydrated and activated by hydrogen sulfide H(2)S to promote melatonin accumulation and subsequent melatonin-dependent stomotal closure to combat osmotic stress. Post-translationally, autoacetylated. In terms of tissue distribution, highly expressed in cauline leaves and seeds, at lower levels in stems, siliques, inflorescences and rosettes leaves and at very low levels in roots. Expressed in the xylem parenchyma and phloem of the leaves and root, and in guard cells of young leaves.

Its subcellular location is the plastid. It is found in the chloroplast. The catalysed reaction is 5-methoxytryptamine + acetyl-CoA = melatonin + CoA + H(+). The enzyme catalyses L-lysyl-[histone] + acetyl-CoA = N(6)-acetyl-L-lysyl-[histone] + CoA + H(+). It catalyses the reaction L-lysyl-[protein] + acetyl-CoA = N(6)-acetyl-L-lysyl-[protein] + CoA + H(+). It carries out the reaction serotonin + acetyl-CoA = N-acetylserotonin + CoA + H(+). The catalysed reaction is N-terminal L-alanyl-[protein] + acetyl-CoA = N-terminal N(alpha)-acetyl-L-alanyl-[protein] + CoA + H(+). The enzyme catalyses N-terminal L-seryl-[protein] + acetyl-CoA = N-terminal N(alpha)-acetyl-L-seryl-[protein] + CoA + H(+). It catalyses the reaction N-terminal L-valyl-[protein] + acetyl-CoA = N-terminal N(alpha)-acetyl-L-valyl-[protein] + CoA + H(+). It carries out the reaction N-terminal glycyl-[protein] + acetyl-CoA = N-terminal N(alpha)-acetylglycyl-[protein] + CoA + H(+). The catalysed reaction is an N-terminal L-alpha-aminoacyl-[protein] + acetyl-CoA = N-terminal N(alpha)-acetyl-L-alpha-aminoacyl-[protein] + CoA + H(+). The enzyme catalyses N-terminal L-threonyl-[protein] + acetyl-CoA = N-terminal N(alpha)-acetyl-L-threonyl-[protein] + CoA + H(+). It catalyses the reaction N-terminal L-methionyl-[protein] + acetyl-CoA = N-terminal N(alpha)-acetyl-L-methionyl-[protein] + CoA + H(+). It carries out the reaction N-terminal L-leucyl-[protein] + acetyl-CoA = N-terminal N(alpha)-acetyl-L-leucyl-[protein] + CoA + H(+). With respect to regulation, inhibited by the viral nuclear shuttle protein (NSP) that binds to the region required for oligomerization. Functionally, protein acetyltransferase with dual specificity triggering both N-alpha-acetylation (NTA), with a preference for alanine, serine, threonine, methionine and to a lower extent valine as substrates (can also use glycine and leucine), and epsilon-lysine acetylation (KA) of several plastid proteins. Triggers lysine acetylation in KEA1 and KEA2. Acetylates in vitro histones H2A and H3. Does not act as a transcriptional activator but required for the dynamic reorganization of thylakoid protein complexes and grana during photosynthetic state transitions. Involved in melatonin biosynthesis by catalyzing the formation of N-acetylserotonin (NAS) from serotonin and of melatonin (N-acetyl-5-methoxytryptamine) from 5-methoxytryptamine (5-MT). By triggering melatonin biosynthesis, contributes to the chloroplast protein quality control (CPQC), which plays a pivotal role in starch synthesis, and confers melatonin-associated tolerance to high light (HL) stress. Prevents the accumulation of oil and anthocyanin content in mature seeds and avoids seed germination in a melatonin-dependent manner, but promotes mucilage production in the seed coat. Contributes to melatonin-mediated anthocyanin production in cold-exposed seedlings. Implicated in melatonin-monitored circadian dynamics of stomatal aperture to minimize night water loss and promote drought tolerance, partly by triggering hydrogen sulfide H(2)S-dependent stomotal closure in response to osmotic stress. (Microbial infection) Required for begomovirus infection and systemic spread. In case of begomoviruses infection, acetylates the capsid protein (CP), but not the nuclear shuttle protein (NSP). Stimulates melatonin-triggered defense responses to the necrotrophic Botrytis cinerea. This Arabidopsis thaliana (Mouse-ear cress) protein is GCN5-related N-acetyltransferase 2, chloroplastic.